A 108-amino-acid chain; its full sequence is Tetrahydromethanopterin S-methyltransferase subunit B (108 aa).

The helical transmembrane segment at 79–99 threads the bilayer; the sequence is GMFFGFWVTMAILVLVTILAV.

Belongs to the MtrB family. The complex is composed of 8 subunits; MtrA, MtrB, MtrC, MtrD, MtrE, MtrF, MtrG and MtrH.

The protein localises to the cell membrane. It catalyses the reaction 5-methyl-5,6,7,8-tetrahydromethanopterin + coenzyme M + 2 Na(+)(in) = 5,6,7,8-tetrahydromethanopterin + methyl-coenzyme M + 2 Na(+)(out). Its pathway is one-carbon metabolism; methanogenesis from CO(2); methyl-coenzyme M from 5,10-methylene-5,6,7,8-tetrahydromethanopterin: step 2/2. Functionally, part of a complex that catalyzes the formation of methyl-coenzyme M and tetrahydromethanopterin from coenzyme M and methyl-tetrahydromethanopterin. This is an energy-conserving, sodium-ion translocating step. This is Tetrahydromethanopterin S-methyltransferase subunit B from Methanococcus maripaludis (strain C7 / ATCC BAA-1331).